A 319-amino-acid polypeptide reads, in one-letter code: Nuclear hormone receptor family member nhr-174 (319 aa).

The segment at residues 7–81 (DPVCPVCEFP…AGMKRNLVRQ (75 aa)) is a DNA-binding region (nuclear receptor). NR C4-type zinc fingers lie at residues 10 to 31 (CPVC…CGAC) and 47 to 63 (CEKK…CRAC). In terms of domain architecture, NR LBD spans 130–319 (EAEKDVSKIL…SMKKSRYLQF (190 aa)).

It belongs to the nuclear hormone receptor family.

It is found in the nucleus. Orphan nuclear receptor. This Caenorhabditis elegans protein is Nuclear hormone receptor family member nhr-174 (nhr-174).